The sequence spans 340 residues: tRNA-dihydrouridine(20/20a) synthase (340 aa).

FMN contacts are provided by residues 22-24 and Q75; that span reads PMM. C105 serves as the catalytic Proton donor. FMN is bound by residues K144, H177, 217-219, and 239-240; these read NGG and GR.

It belongs to the Dus family. DusA subfamily. It depends on FMN as a cofactor.

The catalysed reaction is 5,6-dihydrouridine(20) in tRNA + NADP(+) = uridine(20) in tRNA + NADPH + H(+). It catalyses the reaction 5,6-dihydrouridine(20) in tRNA + NAD(+) = uridine(20) in tRNA + NADH + H(+). The enzyme catalyses 5,6-dihydrouridine(20a) in tRNA + NADP(+) = uridine(20a) in tRNA + NADPH + H(+). It carries out the reaction 5,6-dihydrouridine(20a) in tRNA + NAD(+) = uridine(20a) in tRNA + NADH + H(+). Its function is as follows. Catalyzes the synthesis of 5,6-dihydrouridine (D), a modified base found in the D-loop of most tRNAs, via the reduction of the C5-C6 double bond in target uridines. Specifically modifies U20 and U20a in tRNAs. This Xylella fastidiosa (strain 9a5c) protein is tRNA-dihydrouridine(20/20a) synthase.